Consider the following 282-residue polypeptide: Bifunctional protein FolD (282 aa).

Residues 165–167 (GRS) and S190 contribute to the NADP(+) site.

This sequence belongs to the tetrahydrofolate dehydrogenase/cyclohydrolase family. In terms of assembly, homodimer.

It catalyses the reaction (6R)-5,10-methylene-5,6,7,8-tetrahydrofolate + NADP(+) = (6R)-5,10-methenyltetrahydrofolate + NADPH. It carries out the reaction (6R)-5,10-methenyltetrahydrofolate + H2O = (6R)-10-formyltetrahydrofolate + H(+). It participates in one-carbon metabolism; tetrahydrofolate interconversion. Its function is as follows. Catalyzes the oxidation of 5,10-methylenetetrahydrofolate to 5,10-methenyltetrahydrofolate and then the hydrolysis of 5,10-methenyltetrahydrofolate to 10-formyltetrahydrofolate. The polypeptide is Bifunctional protein FolD (Acinetobacter baumannii (strain ATCC 17978 / DSM 105126 / CIP 53.77 / LMG 1025 / NCDC KC755 / 5377)).